Consider the following 443-residue polypeptide: MTSSTPRNEELFDRARQLMPGGVNSPVRAFGSVGGTPRFMVSAKGPYLMDADGNEYVDLVCSWGPALLGHAHPAVLDAVHAAVDRGLSFGASTPDEANLAEIVMERVPAVERLRMVSTGTEATMTAVRLARGFTGRNLIIKFAGCYHGHLDGLLAAAGSGVATLALPGSAGVTEATAAETLVLPYNDLAAVKEAFATHGSNIAAVITEAAPANMGVVTPGEGFNLGLSRITREHGALLIVDEVLTGFRTGYSGYWGLTGGAPDATDPWTPDLLTFGKVIGGGMPTAALGGRADVMDYLAPTGPVYQAGTLSGNPVAMAAGVATLTHATRDVYSYIDVRSLELSSALSSALDAAGVDHSIQFAGNLFSVAFGTSAHGVHNYADAQGQEAFRYAPFFHSMLESGVYLPPSVFEAWFLSAAHDDAAMNRIFDALPAAAKAAAAAQG.

N6-(pyridoxal phosphate)lysine is present on Lys277.

The protein belongs to the class-III pyridoxal-phosphate-dependent aminotransferase family. HemL subfamily. As to quaternary structure, homodimer. The cofactor is pyridoxal 5'-phosphate.

The protein resides in the cytoplasm. The catalysed reaction is (S)-4-amino-5-oxopentanoate = 5-aminolevulinate. It participates in porphyrin-containing compound metabolism; protoporphyrin-IX biosynthesis; 5-aminolevulinate from L-glutamyl-tRNA(Glu): step 2/2. This is Glutamate-1-semialdehyde 2,1-aminomutase from Pseudarthrobacter chlorophenolicus (strain ATCC 700700 / DSM 12829 / CIP 107037 / JCM 12360 / KCTC 9906 / NCIMB 13794 / A6) (Arthrobacter chlorophenolicus).